The chain runs to 264 residues: Chymotrypsin-like protease CTRL-1 (264 aa).

Positions 1-18 (MLLLSLTLSLVLLGSSWG) are cleaved as a signal peptide. Positions 19 to 33 (CGIPAIKPALSFSQR) are cleaved as a propeptide — activation peptide. Cystine bridges form between cysteine 19–cysteine 141, cysteine 60–cysteine 76, cysteine 155–cysteine 220, cysteine 187–cysteine 201, and cysteine 210–cysteine 239. Residues 34-262 (IVNGENAVLG…FSTWINQVIA (229 aa)) form the Peptidase S1 domain. The active-site Charge relay system is the histidine 75. Asparagine 114 carries N-linked (GlcNAc...) asparagine glycosylation. Aspartate 121 functions as the Charge relay system in the catalytic mechanism. The active-site Charge relay system is the serine 214.

This sequence belongs to the peptidase S1 family.

This is Chymotrypsin-like protease CTRL-1 (CTRL) from Homo sapiens (Human).